The following is a 159-amino-acid chain: UPF0178 protein AZC_4000 (159 aa).

This sequence belongs to the UPF0178 family.

In Azorhizobium caulinodans (strain ATCC 43989 / DSM 5975 / JCM 20966 / LMG 6465 / NBRC 14845 / NCIMB 13405 / ORS 571), this protein is UPF0178 protein AZC_4000.